Consider the following 90-residue polypeptide: Mitochondrial import inner membrane translocase subunit Tim8 A (90 aa).

Residues 36–59 (CWDKCMDKPGPKLDSRAEMCFVNC) carry the Twin CX3C motif motif. Intrachain disulfides connect cysteine 36-cysteine 59 and cysteine 40-cysteine 55.

The protein belongs to the small Tim family. Heterohexamer; composed of 3 copies of TIMM8A and 3 copies of TIMM13, named soluble 70 kDa complex. Associates with the TIM22 complex, whose core is composed of TIMM22.

The protein resides in the mitochondrion inner membrane. Its function is as follows. Mitochondrial intermembrane chaperone that participates in the import and insertion of some multi-pass transmembrane proteins into the mitochondrial inner membrane. Also required for the transfer of beta-barrel precursors from the TOM complex to the sorting and assembly machinery (SAM complex) of the outer membrane. Acts as a chaperone-like protein that protects the hydrophobic precursors from aggregation and guide them through the mitochondrial intermembrane space. The TIMM8-TIMM13 complex mediates the import of some proteins while the predominant TIMM9-TIMM10 70 kDa complex mediates the import of much more proteins. This Takifugu rubripes (Japanese pufferfish) protein is Mitochondrial import inner membrane translocase subunit Tim8 A (timm8a).